Here is a 547-residue protein sequence, read N- to C-terminus: Sodium-coupled neutral amino acid transporter 4 (547 aa).

The disordered stretch occupies residues M1–S26. The Extracellular segment spans residues M1–G104. S49 carries the phosphoserine modification. A helical transmembrane segment spans residues I105–L125. Topologically, residues L126 to K151 are cytoplasmic. The chain crosses the membrane as a helical span at residues I152–I172. Residues I173–Y195 are Extracellular-facing. A helical membrane pass occupies residues P196–L216. Residues K217–G220 lie on the Cytoplasmic side of the membrane. The chain crosses the membrane as a helical span at residues Y221–I241. At Y242–T332 the chain is on the extracellular side. Cysteines 249 and 321 form a disulfide. N260, N264, and N276 each carry an N-linked (GlcNAc...) asparagine glycan. A helical transmembrane segment spans residues A333–Y353. Topologically, residues S354–N369 are cytoplasmic. The helical transmembrane segment at I370–F390 threads the bilayer. Residues Y391 to P411 are Extracellular-facing. Residues L412–F432 form a helical membrane-spanning segment. The Cytoplasmic segment spans residues P433–H453. The helical transmembrane segment at F454 to I474 threads the bilayer. At K475 to Y476 the chain is on the extracellular side. The helical transmembrane segment at I477–F497 threads the bilayer. Over Y498–G514 the chain is Cytoplasmic. A helical membrane pass occupies residues A515 to I535. Topologically, residues D536–H547 are extracellular.

Belongs to the amino acid/polyamine transporter 2 family. Post-translationally, the disulfide bond plays an important role in substrate transport, but has no effect on trafficking to the cell surface.

It localises to the cell membrane. Its subcellular location is the cell projection. The protein localises to the microvillus membrane. The catalysed reaction is L-methionine(in) + Na(+)(in) = L-methionine(out) + Na(+)(out). It carries out the reaction L-asparagine(in) + Na(+)(in) = L-asparagine(out) + Na(+)(out). The enzyme catalyses L-threonine(in) + Na(+)(in) = L-threonine(out) + Na(+)(out). It catalyses the reaction L-serine(in) + Na(+)(in) = L-serine(out) + Na(+)(out). The catalysed reaction is glycine(in) + Na(+)(in) = glycine(out) + Na(+)(out). It carries out the reaction L-alanine(in) + Na(+)(in) = L-alanine(out) + Na(+)(out). The enzyme catalyses L-glutamine(in) + Na(+)(in) = L-glutamine(out) + Na(+)(out). It catalyses the reaction L-histidine(in) + Na(+)(in) = L-histidine(out) + Na(+)(out). The catalysed reaction is L-cysteine(in) + Na(+)(in) = L-cysteine(out) + Na(+)(out). It carries out the reaction L-proline(in) + Na(+)(in) = L-proline(out) + Na(+)(out). In terms of biological role, symporter that cotransports neutral amino acids and sodium ions from the extraccellular to the intracellular side of the cell membrane. The transport is electrogenic, pH dependent and partially tolerates substitution of Na(+) by Li(+). Preferentially transports smaller amino acids, such as glycine, L-alanine, L-serine, L-asparagine and L-threonine, followed by L-cysteine, L-histidine, L-proline and L-glutamine and L-methionine. The protein is Sodium-coupled neutral amino acid transporter 4 of Pongo abelii (Sumatran orangutan).